A 430-amino-acid chain; its full sequence is Tapasin (430 aa).

An N-terminal signal peptide occupies residues 1–15; the sequence is MAAGLRLLLAGLCWS. At 16–399 the chain is on the lumenal side; sequence QFRVEDAASP…TEGPHLEDIT (384 aa). A disulfide bridge connects residues C34 and C99. The tract at residues 61-128 is disordered; that stretch reads GDAETPPEPG…PDARSPPTAG (68 aa). N78 carries N-linked (GlcNAc...) asparagine glycosylation. Over residues 101–111 the composition is skewed to polar residues; that stretch reads LNPTNPQTGSD. Ig-like C1-type domains lie at 139–273 and 278–382; these read PQYG…LQLH and PKVT…MRVS. C299 and C368 are joined by a disulfide. Residues 316-342 are disordered; that stretch reads RAGGSGTSQSPRDTVMDSWTSGHRQAA. Residues 322–338 are compositionally biased toward polar residues; it reads TSQSPRDTVMDSWTSGH. Residues 400–417 form a helical membrane-spanning segment; the sequence is GLFLVAFVLCGLIRWLYP. The Cytoplasmic portion of the chain corresponds to 418 to 430; that stretch reads KAARPKEETKKSQ.

As to quaternary structure, interacts with TAP1 and is thus a subunit of the TAP complex. Interaction with TAP1 is TAP2 independent and is required for efficient peptide-TAP interaction. Obligatory mediator for the interaction between newly assembled MHC class I molecules, calreticulin, ERp57 and TAP. Up to 4 MHC class I/tapasin complexes bind to 1 TAP.

It localises to the endoplasmic reticulum membrane. Its function is as follows. Involved in the association of MHC class I with transporter associated with antigen processing (TAP) and in the assembly of MHC class I with peptide (peptide loading). In Gallus gallus (Chicken), this protein is Tapasin (TAPBP).